The chain runs to 300 residues: Fatty acid hydroxylase uhd1 (300 aa).

NADP(+) contacts are provided by residues 14 to 20 (GANGFVG), R39, 63 to 64 (DL), 83 to 85 (VAS), Y156, K160, 183 to 186 (PVYI), and S199. K160 functions as the Proton donor in the catalytic mechanism.

This sequence belongs to the NAD(P)-dependent epimerase/dehydratase family. Dihydroflavonol-4-reductase subfamily.

It functions in the pathway secondary metabolite biosynthesis. In terms of biological role, fatty acid hydroxylase; part of the gene cluster that mediates the biosynthesis of the glycolipid biosurfactant ustilagic acid (UA). UA is a secreted cellobiose glycolipid that is toxic for many microorganisms and confers biocontrol activity to U.maydis. UA consists of 15,16-dihydroxypalmitic or 2,15,16-trihydroxypalmitic acid, which is O-glycosidically linked to cellobiose at its terminal hydroxyl group. In addition, the cellobiose moiety is acetylated and acylated with a short-chain hydroxy fatty acid. UA biosynthesis starts with omega-hydroxylation of palmitic acid catalyzed by the cytochrome P450 monooxygenase cyp1. Terminal hydroxylation of palmitic acid precedes subterminal hydroxylation catalyzed by the cytochrome P450 monooxygenase cyp2. Sequential glucosylation of the hydroxy fatty acid is probably catalyzed by the glycosyltransferase ugt1. The cellobiose lipid is further decorated by acetylation of the proximal glucose residue and by acylation with a short-chain beta-hydroxy fatty acid at the distal glucose residue. The acyltransferase uat1 may be a good candidate for catalyzing either acetylation or acylation of the cellobiose lipid. The fatty acid synthase fas2 may be involved in synthesis of the carbon backbone of the short-chain beta-hydroxy fatty acid esterified to the cellobiose disaccharide. The secreted UA consists of a mixture of both alpha-hydroxylated and non-hydroxylated glycolipids; therefore, alpha-hydroxylation of the long-chain fatty, catalyzed by the fatty acid hydroxylase ahd1, occurs late in UA biosynthesis and may be the last step before secretion. The polypeptide is Fatty acid hydroxylase uhd1 (Mycosarcoma maydis (Corn smut fungus)).